We begin with the raw amino-acid sequence, 509 residues long: Histone deacetylase 2 (509 aa).

The interval Arg24–Gly338 is histone deacetylase. Catalysis depends on His158, which acts as the Proton donor/acceptor. Residues Asp193, His195, and Asp281 each contribute to the Zn(2+) site. Residues Pro394–Leu509 form a disordered region. 3 stretches are compositionally biased toward basic and acidic residues: residues Phe398 to Glu409, Asp418 to Pro434, and Val448 to Pro472. The span at Ser481–Ala494 shows a compositional bias: polar residues.

Belongs to the histone deacetylase family. HD Type 1 subfamily. Requires Zn(2+) as cofactor. As to expression, expressed in roots.

The protein localises to the nucleus. The enzyme catalyses N(6)-acetyl-L-lysyl-[histone] + H2O = L-lysyl-[histone] + acetate. Responsible for the deacetylation of lysine residues on the N-terminal part of the core histones (H2A, H2B, H3 and H4). Histone deacetylation gives a tag for epigenetic repression and plays an important role in transcriptional regulation, cell cycle progression and developmental events. Histone deacetylases act via the formation of large multiprotein complexes. In Oryza sativa subsp. japonica (Rice), this protein is Histone deacetylase 2.